The following is a 734-amino-acid chain: Photosystem I P700 chlorophyll a apoprotein A2 (734 aa).

Transmembrane regions (helical) follow at residues 46–69 (IFASHFGQLAIIFLWTSGNLFHVA), 135–158 (LYSGALFLLFLSAISLLAGWLHLQ), 175–199 (LNHHLSGLFGVSSLAWTGHLVHVAI), 273–291 (MAHHHLAIAILFLLAGHMY), 330–353 (IHFQLGLALASLGVITSLVAQHMY), 369–395 (AALYTHHQYIAGFIMTGAFAHGAIFFI), 417–439 (AIISHLSWASLFLGFHTLGLYVH), and 517–535 (FLVHHAIALGLHTTTLILV). Cys-559 and Cys-568 together coordinate [4Fe-4S] cluster. 2 helical membrane passes run 575-596 (AFYLAVFWMLNTIGWVTFYWHW) and 643-665 (LSVWAWMFLFGHLVWATGFMFLI). Residues His-654, Met-662, and Tyr-670 each coordinate chlorophyll a. Residue Trp-671 participates in phylloquinone binding. Residues 707–727 (LVGLAHFSVGYIFTYAAFLIA) form a helical membrane-spanning segment.

Belongs to the PsaA/PsaB family. As to quaternary structure, the PsaA/B heterodimer binds the P700 chlorophyll special pair and subsequent electron acceptors. PSI consists of a core antenna complex that captures photons, and an electron transfer chain that converts photonic excitation into a charge separation. The eukaryotic PSI reaction center is composed of at least 11 subunits. The cofactor is P700 is a chlorophyll a/chlorophyll a' dimer, A0 is one or more chlorophyll a, A1 is one or both phylloquinones and FX is a shared 4Fe-4S iron-sulfur center..

It localises to the plastid. Its subcellular location is the chloroplast thylakoid membrane. It carries out the reaction reduced [plastocyanin] + hnu + oxidized [2Fe-2S]-[ferredoxin] = oxidized [plastocyanin] + reduced [2Fe-2S]-[ferredoxin]. Its function is as follows. PsaA and PsaB bind P700, the primary electron donor of photosystem I (PSI), as well as the electron acceptors A0, A1 and FX. PSI is a plastocyanin-ferredoxin oxidoreductase, converting photonic excitation into a charge separation, which transfers an electron from the donor P700 chlorophyll pair to the spectroscopically characterized acceptors A0, A1, FX, FA and FB in turn. Oxidized P700 is reduced on the lumenal side of the thylakoid membrane by plastocyanin. The protein is Photosystem I P700 chlorophyll a apoprotein A2 of Lotus japonicus (Lotus corniculatus var. japonicus).